The primary structure comprises 928 residues: Retinoblastoma-associated protein (928 aa).

The interval 1–42 (MPPKTPRKTAATAAAAAAEPPAPPPPPPPEEDPEQDSGPEDL) is disordered. N,N-dimethylproline is present on Pro2. The span at 8–19 (KTAATAAAAAAE) shows a compositional bias: low complexity. Acidic residues predominate over residues 29–39 (PEEDPEQDSGP). At Ser37 the chain carries Phosphoserine. Residue Ser249 is modified to Phosphoserine; by CDK1. Thr252 carries the phosphothreonine; by CDK1 modification. Thr356 is subject to Phosphothreonine. Thr373 bears the Phosphothreonine; by CDK1 mark. The domain A stretch occupies residues 373 to 579 (TPVRTVMNTI…FDLIKQSKDR (207 aa)). The pocket; binds T and E1A stretch occupies residues 373-771 (TPVRTVMNTI…QRLKTNILQY (399 aa)). Ser567 bears the Phosphoserine; by CDK2 mark. The spacer stretch occupies residues 580–639 (EGPTDHLESACPLNLPLQNNHTAADMYLSPVRSPKKKGSTTRVNSTANAETQATSAFQTQ). Ser608 bears the Phosphoserine mark. The disordered stretch occupies residues 610–632 (VRSPKKKGSTTRVNSTANAETQA). Ser612 is subject to Phosphoserine; by CHEK2 and CHEK1. Residues 619–632 (TTRVNSTANAETQA) show a composition bias toward polar residues. Ser624 bears the Phosphoserine mark. The segment at 640–771 (KPLKSTSLSL…QRLKTNILQY (132 aa)) is domain B. The interaction with LIMD1 stretch occupies residues 763-928 (RLKTNILQYA…SMDTSNKEEK (166 aa)). Residues 771–928 (YASTRPPTLS…SMDTSNKEEK (158 aa)) form a domain C; mediates interaction with E4F1 region. Phosphoserine is present on residues Ser780, Ser788, and Ser795. At Ser807 the chain carries Phosphoserine; by CDK1 and CDK3. Lys810 is subject to N6-methyllysine; by SMYD2. Ser811 bears the Phosphoserine; by CDK1 and CDK3 mark. Thr821 is modified (phosphothreonine; by CDK6). A Phosphothreonine modification is found at Thr823. At Thr826 the chain carries Phosphothreonine; by CDK4. Phosphothreonine is present on Thr841. Ser855 carries the phosphoserine modification. Position 860 is an N6-methyllysine; by SMYD2 (Lys860). The Bipartite nuclear localization signal signature appears at 860-876 (KRSAEGSNPPKPLKKLR). The interval 860–928 (KRSAEGSNPP…SMDTSNKEEK (69 aa)) is disordered. An N6-acetyllysine; by PCAF mark is found at Lys873 and Lys874. Basic and acidic residues predominate over residues 915 to 928 (KMNDSMDTSNKEEK).

The protein belongs to the retinoblastoma protein (RB) family. As to quaternary structure, the hypophosphorylated form interacts with and sequesters the E2F1 transcription factor, thereby inhibiting E2F1 transcription. Interacts with heterodimeric E2F/DP transcription factor complexes containing TFDP1 and either E2F1, E2F3, E2F4 or E2F5, or TFDP2 and E2F4. Interacts (when hyperphosphorylated and hypophosphorylated) with PKP3; the interaction inhibits RB1 interaction with and repression of the transcription factor E2F1, potentially via sequestering RB1 to the cytoplasm. The unphosphorylated form interacts with EID1, ARID3B, KDM5A, SUV39H1, MJD2A/JHDM3A and THOC1. Interacts with the N-terminal domain of TAF1. Interacts with SNW1, ATAD5, AATF, DNMT1, LIN9, LMNA, KMT5B, KMT5C, PELP1, UHRF2 and TMPO-alpha. Interacts with GRIP1 and UBR4. Interacts with ARID4A and KDM5B. Interacts with E4F1 and LIMD1. Interacts with SMARCA4/BRG1 and HDAC1. Interacts with PSMA3 and USP4. Interacts (when methylated at Lys-860) with L3MBTL1. Interacts with CHEK2; phosphorylates RB1. Interacts with CDK1 and CDK2. Interacts with PRMT2. Interacts with CEBPA. P-TEFB complex interacts with RB1; promotes phosphorylation of RB1. Interacts with RBBP9; the interaction disrupts RB1 binding to E2F1. Interacts with KAT2B/PCAF and EP300/P300. Interacts with PAX5. Interacts (phosphorylated and unphosphorylated) with BLCAP. May interact with NDC80. In terms of assembly, (Microbial infection) Interacts with adenovirus E1A protein. (Microbial infection) Interacts with HPV E7 protein. As to quaternary structure, (Microbial infection) Interacts with SV40 large T antigen. In terms of assembly, (Microbial infection) Interacts with human cytomegalovirus/HHV-5 proteins UL82 and UL123. (Microbial infection) Interacts with molluscum contagiosum virus protein MC007. Post-translationally, phosphorylated by CDK6 and CDK4, and subsequently by CDK2 at Ser-567 in G1, thereby releasing E2F1 which is then able to activate cell growth. Dephosphorylated at the late M phase. SV40 large T antigen, HPV E7 and adenovirus E1A bind to the underphosphorylated, active form of pRb. Phosphorylation at Thr-821 and Thr-826 promotes interaction between the C-terminal domain C and the Pocket domain, and thereby inhibits interactions with heterodimeric E2F/DP transcription factor complexes. Dephosphorylated at Ser-795 by calcineruin upon calcium stimulation. CDK3/cyclin-C-mediated phosphorylation at Ser-807 and Ser-811 is required for G0-G1 transition. Phosphorylated by CDK1 and CDK2 upon TGFB1-mediated apoptosis. N-terminus is methylated by METTL11A/NTM1. Monomethylation at Lys-810 by SMYD2 enhances phosphorylation at Ser-807 and Ser-811, and promotes cell cycle progression. Monomethylation at Lys-860 by SMYD2 promotes interaction with L3MBTL1. In terms of processing, acetylated during keratinocyte differentiation. Acetylation at Lys-873 and Lys-874 regulates subcellular localization. Can be deacetylated by SIRT1. Expressed in the retina. Expressed in foreskin keratinocytes (at protein level).

The protein resides in the nucleus. Its subcellular location is the cytoplasm. Tumor suppressor that is a key regulator of the G1/S transition of the cell cycle. The hypophosphorylated form binds transcription regulators of the E2F family, preventing transcription of E2F-responsive genes. Both physically blocks E2Fs transactivating domain and recruits chromatin-modifying enzymes that actively repress transcription. Cyclin and CDK-dependent phosphorylation of RB1 induces its dissociation from E2Fs, thereby activating transcription of E2F responsive genes and triggering entry into S phase. RB1 also promotes the G0-G1 transition upon phosphorylation and activation by CDK3/cyclin-C. Directly involved in heterochromatin formation by maintaining overall chromatin structure and, in particular, that of constitutive heterochromatin by stabilizing histone methylation. Recruits and targets histone methyltransferases SUV39H1, KMT5B and KMT5C, leading to epigenetic transcriptional repression. Controls histone H4 'Lys-20' trimethylation. Inhibits the intrinsic kinase activity of TAF1. Mediates transcriptional repression by SMARCA4/BRG1 by recruiting a histone deacetylase (HDAC) complex to the c-FOS promoter. In resting neurons, transcription of the c-FOS promoter is inhibited by BRG1-dependent recruitment of a phospho-RB1-HDAC1 repressor complex. Upon calcium influx, RB1 is dephosphorylated by calcineurin, which leads to release of the repressor complex. Its function is as follows. (Microbial infection) In case of viral infections, interactions with SV40 large T antigen, HPV E7 protein or adenovirus E1A protein induce the disassembly of RB1-E2F1 complex thereby disrupting RB1's activity. The polypeptide is Retinoblastoma-associated protein (RB1) (Homo sapiens (Human)).